A 257-amino-acid chain; its full sequence is Phosphonates import ATP-binding protein PhnC (257 aa).

The ABC transporter domain occupies 4-248; that stretch reads IEFKDVNKVY…VFNDIYGRKL (245 aa). An ATP-binding site is contributed by 37-44; the sequence is GLSGAGKS.

Belongs to the ABC transporter superfamily. Phosphonates importer (TC 3.A.1.9.1) family. In terms of assembly, the complex is composed of two ATP-binding proteins (PhnC), two transmembrane proteins (PhnE) and a solute-binding protein (PhnD).

It is found in the cell membrane. It catalyses the reaction phosphonate(out) + ATP + H2O = phosphonate(in) + ADP + phosphate + H(+). Functionally, part of the ABC transporter complex PhnCDE involved in phosphonates import. Responsible for energy coupling to the transport system. The chain is Phosphonates import ATP-binding protein PhnC from Staphylococcus haemolyticus (strain JCSC1435).